Reading from the N-terminus, the 359-residue chain is Tropomodulin-1 (359 aa).

Residues 39–61 (PDNALLPAGLRQKDQTTKAPTGP) are disordered. Residues 39–138 (PDNALLPAGL…CDIAAILGMH (100 aa)) are tropomyosin-binding.

The protein belongs to the tropomodulin family. As to quaternary structure, binds to the N-terminus of tropomyosin and to actin. Interacts with FLII.

It is found in the cytoplasm. Its subcellular location is the cytoskeleton. Functionally, blocks the elongation and depolymerization of the actin filaments at the pointed end. The Tmod/TM complex contributes to the formation of the short actin protofilament, which in turn defines the geometry of the membrane skeleton. May play an important role in regulating the organization of actin filaments by preferentially binding to a specific tropomyosin isoform at its N-terminus. This is Tropomodulin-1 (TMOD1) from Bos taurus (Bovine).